The chain runs to 412 residues: MNAEIIAVGTELLLGQIANTNAQFLSEKLASIGINVYYHTVVGDNNKRLQQAIEVAEERADMLIFTGGLGPTKDDLTKETIASSLAEELVYDEKALASISDYFKRTGREFTENNKKQALVLDGATVFANDHGMAPGMGLNKNGKVYILLPGPPKEMKPMYVSYVEPFLRNFTTGENIYSRVLRFFGIGESQLEVKVQDLIDGQTNPTIAPLANDGEVTLRLTAKHQNVDEAEKLIQHVEDLILERVGEFFYGYDQEFLHDKAIELLKKKGLTLACAESLTGGLFGNQVTESAGVSSVFKGGVICYHNDVKQHVLHVPEEVLFTDGAVSKECARYLAENVKELLEADIGISFTGVAGPDASEHKEPGTVFVGLAIKDEPTVVFPLNLSGSRQQIRERSAKYGFYHLYKKLEEI.

Belongs to the CinA family.

The sequence is that of Putative competence-damage inducible protein from Bacillus cereus (strain AH820).